A 258-amino-acid polypeptide reads, in one-letter code: Putative cysteine-rich repeat secretory protein 35 (258 aa).

The first 29 residues, 1-29 (MYSSYSLSKRLIYVPILAIQFLLVRSVSS), serve as a signal peptide directing secretion. 2 Gnk2-homologous domains span residues 36–138 (YLNH…TIKP) and 146–255 (FKNT…LYPF).

It belongs to the cysteine-rich repeat secretory protein family.

It localises to the secreted. The sequence is that of Putative cysteine-rich repeat secretory protein 35 (CRRSP35) from Arabidopsis thaliana (Mouse-ear cress).